We begin with the raw amino-acid sequence, 1066 residues long: Vinculin (1066 aa).

Residues 1–835 form an N-terminal globular head region; sequence MPVFHTRTIE…GAVAKVREAF (835 aa). Position 97 is a phosphoserine (serine 97). The interval 168 to 208 is talin-interaction; the sequence is MTKMAKMIDERQQELTHQEHRVMLVNSMNTVKELLPVLISA. Lysine 173 carries the post-translational modification N6-acetyllysine. 3 repeat units span residues 259 to 369, 370 to 479, and 480 to 589. Residues 259-589 are 3 X 112 AA tandem repeats; the sequence is ASKDTEAMKR…LKDLKTQMQE (331 aa). Serine 260, serine 272, serine 275, serine 290, serine 346, and serine 434 each carry phosphoserine. Lysine 496 is modified (N6-acetyllysine). At tyrosine 537 the chain carries Phosphotyrosine. Phosphoserine is present on residues serine 574, serine 579, and serine 600. A phosphothreonine mark is found at threonine 604 and threonine 672. Residue serine 721 is modified to Phosphoserine. The tract at residues 741–764 is interaction with ACTN4; sequence MANIQPQMLVAGATSIARRANRIL. A phosphoserine mark is found at serine 795 and serine 809. A Phosphotyrosine modification is found at tyrosine 822. The interval 836-878 is linker (Pro-rich); sequence QPQEPDFPPPPPDLEQLRLTDELAPPKPPLPEGEVPPPRPPPP. Residues 857-887 are disordered; it reads ELAPPKPPLPEGEVPPPRPPPPEEKDEEFPE. Positions 860–876 are enriched in pro residues; the sequence is PPKPPLPEGEVPPPRPP. The C-terminal tail stretch occupies residues 879 to 1066; that stretch reads EEKDEEFPEQ…RWVRKTPWYQ (188 aa). Facilitates phospholipid membrane insertion stretches follow at residues 935 to 978 and 1052 to 1066; these read RLVR…KRIR and AGFT…PWYQ. Position 1065 is a phosphotyrosine; by SRC-type Tyr-kinases (tyrosine 1065).

The protein belongs to the vinculin/alpha-catenin family. As to quaternary structure, exhibits self-association properties. Part of a complex composed of THSD1, PTK2/FAK1, TLN1 and VCL. Interacts with APBB1IP, NRAP and TLN1. Interacts with CTNNB1 and this interaction is necessary for its localization to the cell-cell junctions and for its function in regulating cell surface expression of E-cadherin. Interacts with SORBS1. Interacts with SYNM. Interacts with CTNNA1. Binds to ACTN4; this interaction triggers conformational changes. Interacts with FLII. Phosphorylated; on serines, threonines and tyrosines. Phosphorylation on Tyr-1065 in activated platelets affects head-tail interactions and cell spreading but has no effect on actin binding nor on localization to focal adhesion plaques. Post-translationally, acetylated; mainly by myristic acid but also by a small amount of palmitic acid.

The protein localises to the cell membrane. The protein resides in the cell junction. It is found in the adherens junction. It localises to the focal adhesion. Its subcellular location is the cytoplasm. The protein localises to the cytoskeleton. The protein resides in the sarcolemma. It is found in the cell projection. It localises to the podosome. Its function is as follows. Actin filament (F-actin)-binding protein involved in cell-matrix adhesion and cell-cell adhesion. Regulates cell-surface E-cadherin expression and potentiates mechanosensing by the E-cadherin complex. May also play important roles in cell morphology and locomotion. This Rattus norvegicus (Rat) protein is Vinculin.